The following is a 438-amino-acid chain: (S)-3,5-dihydroxyphenylglycine transaminase (438 aa).

The residue at position 266 (lysine 266) is an N6-(pyridoxal phosphate)lysine.

The protein belongs to the class-I pyridoxal-phosphate-dependent aminotransferase family. The cofactor is pyridoxal 5'-phosphate.

It carries out the reaction (S)-3,5-dihydroxyphenylglycine + 2-oxoglutarate = 2-(3,5-dihydroxyphenyl)-2-oxoacetate + L-glutamate. It functions in the pathway antibiotic biosynthesis; vancomycin biosynthesis. Functionally, catalyzes the transamination of p-hydroxybenzoylformate to L-p-hydroxyphenylglycine as part of the biosynthesis of the (S)-3,5-dihydroxyphenylglycine constituent of the glycopeptide antibiotic chloroeremomycin, a member of the vancomycin group of antibiotics. In Amycolatopsis orientalis (Nocardia orientalis), this protein is (S)-3,5-dihydroxyphenylglycine transaminase (hpgT).